Here is a 287-residue protein sequence, read N- to C-terminus: Oxaloacetate decarboxylase (287 aa).

Position 50 (serine 50) interacts with substrate. Aspartate 88 contacts Mg(2+). 2 residues coordinate substrate: arginine 159 and histidine 235.

This sequence belongs to the isocitrate lyase/PEP mutase superfamily. Oxaloacetate decarboxylase family. In terms of assembly, homotetramer; dimer of dimers. It depends on Mg(2+) as a cofactor.

It catalyses the reaction oxaloacetate + H(+) = pyruvate + CO2. Catalyzes the decarboxylation of oxaloacetate into pyruvate. Seems to play a role in maintaining cellular concentrations of bicarbonate and pyruvate. In Marinomonas sp. (strain MWYL1), this protein is Oxaloacetate decarboxylase.